The primary structure comprises 224 residues: Polysialic acid transport ATP-binding protein KpsT (224 aa).

An ABC transporter domain is found at 2 to 223 (IKIENLTKSY…EYKMYQDLDI (222 aa)). 38–45 (GRNGAGKS) contributes to the ATP binding site.

It belongs to the ABC transporter superfamily.

The protein localises to the cell inner membrane. Putative ATP-binding protein, and an energy coupling component for the transport of polysialic acid across the cytoplasmic membrane. The protein is Polysialic acid transport ATP-binding protein KpsT (kpsT) of Escherichia coli.